The sequence spans 196 residues: Imidazoleglycerol-phosphate dehydratase (196 aa).

This sequence belongs to the imidazoleglycerol-phosphate dehydratase family.

The protein localises to the cytoplasm. The enzyme catalyses D-erythro-1-(imidazol-4-yl)glycerol 3-phosphate = 3-(imidazol-4-yl)-2-oxopropyl phosphate + H2O. It participates in amino-acid biosynthesis; L-histidine biosynthesis; L-histidine from 5-phospho-alpha-D-ribose 1-diphosphate: step 6/9. This is Imidazoleglycerol-phosphate dehydratase from Phenylobacterium zucineum (strain HLK1).